We begin with the raw amino-acid sequence, 113 residues long: Bactofilin BacN (113 aa).

Belongs to the bactofilin family. Interacts with BacO and BacP, the 3 proteins colocalize as an extended structure.

It localises to the cytoplasm. The protein resides in the cytoskeleton. Functionally, a non-essential component of the chromosome segregation machinery. Positions the ParA-ParB-parS chromosome segregation machinery within the cell; BacP seems to be the most important bactofilin in this process. Forms a heteropolymeric, subpolar scaffold in the cell; BacP probably forms the core, BacO contributes to position and integrity while BacN does not seem to contribute to assembly. The polypeptide is Bactofilin BacN (Myxococcus xanthus (strain DK1622)).